The chain runs to 560 residues: Protein DETOXIFICATION 45, chloroplastic (560 aa).

The transit peptide at 1 to 75 (MESSRVVVGG…QTNPDCGVVK (75 aa)) directs the protein to the chloroplast. 12 consecutive transmembrane segments (helical) span residues 109–129 (LVML…TLLM), 147–167 (VSMA…LSVA), 209–229 (ALVL…LASG), 250–270 (FLVL…LQGI), 280–300 (PVYC…LFIY), 308–328 (GAAI…LILL), 353–373 (FVLG…SMAA), 389–411 (VWLA…IASS), 426–446 (FVLK…GMSF), 466–486 (GVLF…FDGL), 495–515 (YAAC…LYAP), and 523–543 (VWVG…SRLM).

The protein belongs to the multi antimicrobial extrusion (MATE) (TC 2.A.66.1) family. Ubiquitous.

The protein localises to the plastid. Its subcellular location is the chloroplast membrane. This Arabidopsis thaliana (Mouse-ear cress) protein is Protein DETOXIFICATION 45, chloroplastic.